The chain runs to 362 residues: RING finger protein 32 (362 aa).

The RING-type 1; atypical zinc-finger motif lies at 127–169 (CPICKEEFELRPQVLLSCSHVFHKACLQAFEKFTNKKTCPLCR). Positions 186-215 (RIKCVTRIQAYWRGCVVRKWYRNLRKTVPP) constitute an IQ domain. The segment at 293–352 (CSICLAPLSAAGGQRVGAGRRSREMALLSCSHVFHHACLLALEEFSVGDRPPFHACPLCR) adopts an RING-type 2; atypical zinc-finger fold.

As to expression, highly expressed in testis, less abundant in ovary.

It is found in the cytoplasm. Functionally, may play a role in sperm formation. This Homo sapiens (Human) protein is RING finger protein 32 (RNF32).